Reading from the N-terminus, the 129-residue chain is Small ribosomal subunit protein uS11 (129 aa).

This sequence belongs to the universal ribosomal protein uS11 family. Part of the 30S ribosomal subunit. Interacts with proteins S7 and S18. Binds to IF-3.

In terms of biological role, located on the platform of the 30S subunit, it bridges several disparate RNA helices of the 16S rRNA. Forms part of the Shine-Dalgarno cleft in the 70S ribosome. This Salmonella typhi protein is Small ribosomal subunit protein uS11.